A 325-amino-acid chain; its full sequence is Protein ORANGE-ORANGE, chloroplastic (325 aa).

The transit peptide at 1 to 54 (MDRVLVASYPINHLIRPHSFRIDYCWSTCFTSRLNSGKERQKLSSRWRWRSMAS) directs the protein to the chloroplast. Residues 53–71 (ASDSTDSSSSSSFAPSVES) show a composition bias toward low complexity. The interval 53–77 (ASDSTDSSSSSSFAPSVESDPSDKT) is disordered. 2 consecutive transmembrane segments (helical) span residues 164–184 (LYYVTCYSLIAGIILFGGLLA) and 217–237 (IVASFSGGAVGVISALMVVEV). The interval 226–317 (VGVISALMVV…CTGMAMASEH (92 aa)) is CR-type-like. A CXXCXGXG motif repeat occupies 248-255 (CKYCLGTG). The stretch at 259–266 (CARCSNTG) is one CXXCXXXG motif repeat. One copy of the CXXCXGXG motif repeat lies at 292-299 (CQNCSGSG). A CXXCXXXG motif repeat occupies 303 to 310 (CPTCLCTG).

The protein belongs to the orange-like family.

It localises to the plastid. It is found in the chloroplast membrane. Its function is as follows. Triggers accumulation of carotenoids, mainly beta-carotene, in fruit flesh. The chain is Protein ORANGE-ORANGE, chloroplastic from Cucumis melo (Muskmelon).